The primary structure comprises 134 residues: Large ribosomal subunit protein eL14y (134 aa).

This sequence belongs to the eukaryotic ribosomal protein eL14 family.

This chain is Large ribosomal subunit protein eL14y (RPL14B), found in Arabidopsis thaliana (Mouse-ear cress).